Here is a 301-residue protein sequence, read N- to C-terminus: Phosducin-like protein (301 aa).

Thr2 carries the N-acetylthreonine modification. The segment at 17 to 60 (YSTSEDEDSDHEDKDRGRGAPAISSTPAEAELAGEGISINTGPK) is disordered. Residues Ser20, Ser25, Ser226, Ser293, and Ser296 each carry the phosphoserine modification. The Phosducin domain maps to 36-299 (APAISSTPAE…TCHSEDSDLE (264 aa)). Residues 158-301 (FKQVFEIPSG…HSEDSDLEID (144 aa)) form a thioredoxin fold region.

The protein belongs to the phosducin family. As to quaternary structure, forms a complex with the beta and gamma subunits of the GTP-binding protein, transducin. Interacts with the CCT chaperonin complex.

It is found in the cell projection. The protein resides in the cilium. In terms of biological role, functions as a co-chaperone for CCT in the assembly of heterotrimeric G protein complexes, facilitates the assembly of both Gbeta-Ggamma and RGS-Gbeta5 heterodimers. Also acts as a positive regulator of hedgehog signaling and regulates ciliary function. In Mus musculus (Mouse), this protein is Phosducin-like protein (Pdcl).